The sequence spans 232 residues: Probable GTP-binding protein EngB (232 aa).

An EngB-type G domain is found at 13-188 (IGLEVAFAGR…AGVMGNWYEY (176 aa)). GTP contacts are provided by residues 21–28 (GRSNAGKS), 48–52 (GRTQM), 67–70 (DLPG), 134–137 (TKAD), and 167–169 (FSA). Mg(2+) is bound by residues S28 and T50.

Belongs to the TRAFAC class TrmE-Era-EngA-EngB-Septin-like GTPase superfamily. EngB GTPase family. Mg(2+) serves as cofactor.

Its function is as follows. Necessary for normal cell division and for the maintenance of normal septation. The polypeptide is Probable GTP-binding protein EngB (Psychrobacter arcticus (strain DSM 17307 / VKM B-2377 / 273-4)).